The primary structure comprises 219 residues: MEKKYPRILFRKRLKDLRKDMEEVSQKTLKTHKLAVDLLMEYDEEKKEKVIKNSRAIDDMVFNLERKAISLIAAEQPVAGDLRFIEACIKVGSHLKRIGYLAANIAEAAEKLKDEEIPRRPLEDLKHMSDFVQMMLSKGIYAFLDQNMEMARELRHDDDKVDDLFDQTLEHVTRSMFEDKESISYLVNLLFIARFLERVGDRAVSIADRTIFMITCEKP.

It belongs to the PhoU family. Homodimer.

It localises to the cytoplasm. Plays a role in the regulation of phosphate uptake. The polypeptide is Phosphate-specific transport system accessory protein PhoU homolog 1 (Methanothermobacter thermautotrophicus (strain ATCC 29096 / DSM 1053 / JCM 10044 / NBRC 100330 / Delta H) (Methanobacterium thermoautotrophicum)).